Reading from the N-terminus, the 283-residue chain is Non-selective voltage-gated ion channel VDAC3 (283 aa).

The residue at position 2 (Cys2) is an N-acetylcysteine. Phosphothreonine is present on Thr4. N6-acetyllysine is present on residues Lys12, Lys15, and Lys20. 2 beta stranded membrane-spanning segments follow: residues 26 to 35 (MVKIDLRTKS) and 39 to 47 (VEFSTSGHA). A Glycyl lysine isopeptide (Lys-Gly) (interchain with G-Cter in ubiquitin) cross-link involves residue Lys53. 3 beta stranded membrane-spanning segments follow: residues 54–64 (ASGNLETKYKV), 69–76 (LTFTQKWN), and 80–89 (TLGTEISLEN). The residue at position 90 (Lys90) is an N6-acetyllysine. Residues 95-104 (LKLTLDTIFV) form a beta stranded membrane-spanning segment. Residues Lys109 and Lys110 each participate in a glycyl lysine isopeptide (Lys-Gly) (interchain with G-Cter in ubiquitin) cross-link. The next 10 beta stranded transmembrane spans lie at 111-120 (SGKLKASYKR), 123-130 (FSLGSNVD), 137-145 (TIYGWAVLA), 150-158 (LAGYQMSFD), 163-175 (KLSQNNFALGYKA), 178-185 (FQLHTHVN), 189-198 (EFGGSIYQKV), 202-211 (IETSINLAWT), 218-227 (RFGIAAKYKL), and 231-238 (TSLSAKVN). Ser241 carries the post-translational modification Phosphoserine. NAD(+) contacts are provided by residues 242–244 (LIG) and 260–264 (SALID). A run of 2 beta stranded transmembrane segments spans residues 242–251 (LIGLGYTQTL) and 254–263 (GVKLTLSALI). Lys266 is subject to N6-acetyllysine; alternate. A Glycyl lysine isopeptide (Lys-Gly) (interchain with G-Cter in ubiquitin); alternate cross-link involves residue Lys266. Residues 273–282 (HKVGLGFELE) traverse the membrane as a beta stranded segment.

This sequence belongs to the eukaryotic mitochondrial porin family. As to quaternary structure, interacts with ARMC12 in a TBC1D21-dependent manner. Interacts with MISFA. Ubiquitinated by PRKN during mitophagy, leading to its degradation and enhancement of mitophagy. Deubiquitinated by USP30.

The protein resides in the mitochondrion outer membrane. It localises to the membrane. The enzyme catalyses chloride(in) = chloride(out). It catalyses the reaction K(+)(in) = K(+)(out). Its function is as follows. Non-selective voltage-gated ion channel that mediates the transport of anions and cations through the mitochondrion outer membrane and plasma membrane. Forms a high-conducting channel with a stable open state and a voltage-induced closure with a mild preference for anions over cations. Involved in male fertility and sperm mitochondrial sheath formation. The chain is Non-selective voltage-gated ion channel VDAC3 from Oryctolagus cuniculus (Rabbit).